Consider the following 289-residue polypeptide: Bifunctional protein FolD (289 aa).

Residues G166 to S168 and I232 each bind NADP(+).

It belongs to the tetrahydrofolate dehydrogenase/cyclohydrolase family. In terms of assembly, homodimer.

It carries out the reaction (6R)-5,10-methylene-5,6,7,8-tetrahydrofolate + NADP(+) = (6R)-5,10-methenyltetrahydrofolate + NADPH. It catalyses the reaction (6R)-5,10-methenyltetrahydrofolate + H2O = (6R)-10-formyltetrahydrofolate + H(+). It participates in one-carbon metabolism; tetrahydrofolate interconversion. Catalyzes the oxidation of 5,10-methylenetetrahydrofolate to 5,10-methenyltetrahydrofolate and then the hydrolysis of 5,10-methenyltetrahydrofolate to 10-formyltetrahydrofolate. The sequence is that of Bifunctional protein FolD from Methylobacillus flagellatus (strain ATCC 51484 / DSM 6875 / VKM B-1610 / KT).